Consider the following 244-residue polypeptide: S-adenosyl-L-methionine-dependent Diels-Alderase iliD (244 aa).

It belongs to the class I-like SAM-binding methyltransferase superfamily. Erg6/SMT family. Requires S-adenosyl-L-methionine as cofactor.

The catalysed reaction is 3-[(2E,4E,8S,10E,12Z)-4,8-dimethyltetradeca-2,4,10,12-tetraenoyl]-4-hydroxy-5-(4-hydroxyphenyl)-1,2-dihydropyridin-2-one = ilicicolin H. It functions in the pathway mycotoxin biosynthesis. Functionally, S-adenosyl-l-methionine-dependent Diels-Alderase; part of the gene cluster that mediates the biosynthesis of ilicicolin H, a 4-hydroxy-2-pyridonealkaloid that has potent and broad antifungal activities by inhibiting the mitochondrial respiration chain. IliD catalyzes the Diels-Alder reaction that converts the acyclic 2-pyridone intermediate to 8-epi-ilicicolin H. The biosynthesis of ilicicolin H starts with formation of the tetramic acid by the hybrid PKS-NRPS synthetase iliA with the partnering trans-enoyl reductase iliB since iliA lacks a designated enoylreductase (ER) domain. The cytochrome P450 monooxygenase iliC then catalyzes the ring expansion of the tetramate to the acyclic 2-pyridone. The pericyclase iliD further converts the acyclic 2-pyridone into 8-epi-ilicicolin H. 8-epi-ilicicolin H might then spontaneously convert to ilicicolin H since ilicicolin H is produced in the absence of the epimerase iliE, in contrast to what was observed for the Talaromyces variabilis ilicolin H biosynthetic pathway. In Neonectria sp. (strain DH2), this protein is S-adenosyl-L-methionine-dependent Diels-Alderase iliD.